The sequence spans 300 residues: Secreted mono- and diacylglycerol lipase LIP4 (300 aa).

Positions 1–16 are cleaved as a signal peptide; that stretch reads MRFLAFLLCLVPLALC. A disulfide bridge links cysteine 54 with cysteine 293. Residue serine 167 is the Nucleophile of the active site. The active site involves aspartate 224.

This sequence belongs to the AB hydrolase superfamily. Lipase family. Class 3 subfamily.

It is found in the secreted. It catalyses the reaction a monoacylglycerol + H2O = glycerol + a fatty acid + H(+). It carries out the reaction a diacylglycerol + H2O = a monoacylglycerol + a fatty acid + H(+). In terms of biological role, secreted lipase involved in Dandruff and seborrheic dermatitis (D/SD) probably via lipase-mediated breakdown of sebaceous lipids and release of irritating free fatty acids. Shows activity against monoglyceride and diglyceride substrates. Due to an absence of fatty acid synthase genes in Malassezia species, secretory lipases are essential for the yeast to generate free fatty acids from degradation of sebum and assimilate them as lipid sources for growth. Plays an essential role at the pathogen-host interface during disease progression. This is Secreted mono- and diacylglycerol lipase LIP4 from Malassezia restricta (Seborrheic dermatitis infection agent).